The chain runs to 134 residues: Protein Turandot E (134 aa).

A signal peptide spans 1–38 (MSYTRTVHSSTSILKMNSALQISCLLVVLGCLLGSGHC).

The protein belongs to the Turandot family.

Its subcellular location is the secreted. Functionally, a humoral factor that may play a role in stress tolerance. This chain is Protein Turandot E, found in Drosophila simulans (Fruit fly).